Consider the following 245-residue polypeptide: Uridylate kinase (245 aa).

15-18 serves as a coordination point for ATP; it reads KLSG. The interval 23 to 28 is involved in allosteric activation by GTP; it reads GEEGFG. Glycine 57 contributes to the UMP binding site. 2 residues coordinate ATP: glycine 58 and arginine 62. Residues aspartate 77 and 138–145 contribute to the UMP site; that span reads TGNPFCTT. ATP-binding residues include threonine 165, tyrosine 171, and aspartate 174.

It belongs to the UMP kinase family. As to quaternary structure, homohexamer.

The protein localises to the cytoplasm. It carries out the reaction UMP + ATP = UDP + ADP. Its pathway is pyrimidine metabolism; CTP biosynthesis via de novo pathway; UDP from UMP (UMPK route): step 1/1. With respect to regulation, allosterically activated by GTP. Inhibited by UTP. Its function is as follows. Catalyzes the reversible phosphorylation of UMP to UDP. In Shewanella putrefaciens (strain CN-32 / ATCC BAA-453), this protein is Uridylate kinase.